We begin with the raw amino-acid sequence, 246 residues long: Zinc import ATP-binding protein ZnuC (246 aa).

Positions Leu24–Tyr243 constitute an ABC transporter domain. Gly56–Thr63 provides a ligand contact to ATP.

Belongs to the ABC transporter superfamily. Zinc importer (TC 3.A.1.15.5) family. The complex is composed of two ATP-binding proteins (ZnuC), two transmembrane proteins (ZnuB) and a solute-binding protein (ZnuA).

The protein localises to the cell membrane. The enzyme catalyses Zn(2+)(out) + ATP(in) + H2O(in) = Zn(2+)(in) + ADP(in) + phosphate(in) + H(+)(in). Functionally, part of the ABC transporter complex ZnuABC involved in zinc import. Responsible for energy coupling to the transport system. The chain is Zinc import ATP-binding protein ZnuC from Wolbachia pipientis wMel.